A 603-amino-acid polypeptide reads, in one-letter code: Putative lipase atg15 (603 aa).

Topologically, residues 1–20 (MDQPHRRTRKWHLMDLSVST) are cytoplasmic. Residues 21 to 41 (LLMSLALVLPSCVSAYQPVYF) form a helical; Signal-anchor for type II membrane protein membrane-spanning segment. Topologically, residues 42-603 (RSQEATPFIP…ITPAPILIDL (562 aa)) are lumenal. Asn-166, Asn-201, Asn-223, Asn-281, and Asn-305 each carry an N-linked (GlcNAc...) asparagine glycan. Ser-321 serves as the catalytic Charge relay system. A glycan (N-linked (GlcNAc...) asparagine) is linked at Asn-467.

Belongs to the AB hydrolase superfamily. Lipase family. As to quaternary structure, binds to both phosphatidylinositol (PI) and phosphatidylinositol 3,5-bisphosphate (PIP2).

Its subcellular location is the endosome. The protein resides in the multivesicular body membrane. The protein localises to the prevacuolar compartment membrane. The enzyme catalyses a triacylglycerol + H2O = a diacylglycerol + a fatty acid + H(+). Its function is as follows. Lipase which is essential for lysis of subvacuolar cytoplasm to vacuole targeted bodies and intravacuolar autophagic bodies. Involved in the lysis of intravacuolar multivesicular body (MVB) vesicles. The intravacuolar membrane disintegration by atg15 is critical to life span extension. This is Putative lipase atg15 (atg15) from Emericella nidulans (strain FGSC A4 / ATCC 38163 / CBS 112.46 / NRRL 194 / M139) (Aspergillus nidulans).